The following is a 95-amino-acid chain: Antitoxin TacA1 (95 aa).

Residues 59–95 (FNFNDEQYEEFINLLDAPVADDPVIEKLLARKPQWDV) form a neutralization domain region.

The protein belongs to the TacA antitoxin family. Homodimer. Forms a complex with cognate toxin TacT1. Forms a 4:2 antitoxin:toxin complex with cognate toxin TacT1.

Antitoxin component of a type II toxin-antitoxin (TA) system. Counteracts the toxic effect of cognate toxin TacT1 (T8), but not TacT2 or TacT3. Plays a role in persister cell formation. Its function is as follows. The TacA1-TacT1 complex binds (and probably represses) its own promoter DNA but not that of tacA3-tacT3, it does not repress the tacA3-tacT3 promoter. This chain is Antitoxin TacA1, found in Salmonella typhimurium (strain 14028s / SGSC 2262).